The sequence spans 136 residues: Large ribosomal subunit protein uL16 (136 aa).

Belongs to the universal ribosomal protein uL16 family. As to quaternary structure, part of the 50S ribosomal subunit.

Binds 23S rRNA and is also seen to make contacts with the A and possibly P site tRNAs. The chain is Large ribosomal subunit protein uL16 from Pseudoalteromonas atlantica (strain T6c / ATCC BAA-1087).